Here is a 576-residue protein sequence, read N- to C-terminus: 5'-nucleotidase (576 aa).

The signal sequence occupies residues 1–28 (MRPAAATAPKWLLLALSALLPLWPTAKS). Zn(2+) contacts are provided by Asp-38 and His-40. Cys-53 and Cys-59 are oxidised to a cystine. Asn-55 carries an N-linked (GlcNAc...) asparagine glycan. The Zn(2+) site is built by Asp-87, Asn-119, His-222, and His-245. N-linked (GlcNAc...) asparagine glycosylation is found at Asn-313, Asn-335, and Asn-349. 2 disulfide bridges follow: Cys-355-Cys-360 and Cys-367-Cys-389. Residue Arg-356 coordinates AMP. Arg-356 contributes to the IMP binding site. AMP is bound by residues Asn-392 and Arg-397. Asn-392 and Arg-397 together coordinate IMP. A glycan (N-linked (GlcNAc...) asparagine) is linked at Asn-405. Phe-419 serves as a coordination point for AMP. Phe-419 serves as a coordination point for IMP. An intrachain disulfide couples Cys-478 to Cys-481. Tyr-502 and Asp-508 together coordinate AMP. 2 residues coordinate IMP: Tyr-502 and Asp-508. The GPI-anchor amidated serine moiety is linked to residue Ser-551. Positions 552–576 (AASHYQGSFPLIILSFWAVILVLYQ) are cleaved as a propeptide — removed in mature form.

The protein belongs to the 5'-nucleotidase family. In terms of assembly, homodimer. It depends on Zn(2+) as a cofactor. In terms of tissue distribution, expressed in the brain.

The protein localises to the cell membrane. The enzyme catalyses a ribonucleoside 5'-phosphate + H2O = a ribonucleoside + phosphate. It catalyses the reaction a 2'-deoxyribonucleoside 5'-phosphate + H2O = a 2'-deoxyribonucleoside + phosphate. The catalysed reaction is dTMP + H2O = thymidine + phosphate. It carries out the reaction CMP + H2O = cytidine + phosphate. The enzyme catalyses IMP + H2O = inosine + phosphate. It catalyses the reaction AMP + H2O = adenosine + phosphate. The catalysed reaction is GMP + H2O = guanosine + phosphate. It carries out the reaction UMP + H2O = uridine + phosphate. The enzyme catalyses dAMP + H2O = 2'-deoxyadenosine + phosphate. It catalyses the reaction dCMP + H2O = 2'-deoxycytidine + phosphate. Its function is as follows. Catalyzes the hydrolysis of nucleotide monophosphates, releasing inorganic phosphate and the corresponding nucleoside. AMP is the preferred substrate but can also hydrolyze CMP and GMP. Shows a preference for ribonucleotide monophosphates over their equivalent deoxyribose forms. Other substrates include IMP, UMP, dAMP, dCMP, dTMP, NAD and NMN. In Rattus norvegicus (Rat), this protein is 5'-nucleotidase (Nt5e).